The primary structure comprises 260 residues: Kallikrein-8 (260 aa).

The signal sequence occupies residues 1-28 (MGRPPPCAIQTWILLFLLMGAWAGLTRA). Residues 29 to 32 (QGSK) constitute a propeptide that is removed on maturation. The Peptidase S1 domain occupies 33–257 (ILEGQECKPH…YTNWIKKTMG (225 aa)). Disulfide bonds link Cys39–Cys173, Cys58–Cys74, Cys145–Cys246, Cys152–Cys218, Cys184–Cys198, and Cys208–Cys233. His73 functions as the Charge relay system in the catalytic mechanism. Residue Asn110 is glycosylated (N-linked (GlcNAc...) asparagine). Asp120 functions as the Charge relay system in the catalytic mechanism. Ser212 functions as the Charge relay system in the catalytic mechanism.

It belongs to the peptidase S1 family. Kallikrein subfamily. Interacts with SPINK9. As to expression, restricted to hippocampus.

It is found in the secreted. It localises to the cytoplasm. The catalysed reaction is Cleavage of amide substrates following the basic amino acids Arg or Lys at the P1 position, with a preference for Arg over Lys.. Functionally, serine protease which is capable of degrading a number of proteins such as casein, fibrinogen, kininogen, fibronectin and collagen type IV. Also cleaves L1CAM in response to increased neural activity. Induces neurite outgrowth and fasciculation of cultured hippocampal neurons. Plays a role in the formation and maturation of orphan and small synaptic boutons in the Schaffer-collateral pathway, regulates Schaffer-collateral long-term potentiation in the hippocampus and is required for memory acquisition and synaptic plasticity. Involved in skin desquamation and keratinocyte proliferation. Plays a role in the secondary phase of pathogenesis following spinal cord injury. The chain is Kallikrein-8 (Klk8) from Rattus norvegicus (Rat).